Reading from the N-terminus, the 592-residue chain is UvrABC system protein C (592 aa).

One can recognise a GIY-YIG domain in the interval 15–92 (ALPGCYLMKD…IQKHQPYFNI (78 aa)). One can recognise a UVR domain in the interval 197 to 232 (DNVKKDLTEKMATAAQEMQFERAAELRDQLRYIEAT).

The protein belongs to the UvrC family. As to quaternary structure, interacts with UvrB in an incision complex.

It is found in the cytoplasm. Its function is as follows. The UvrABC repair system catalyzes the recognition and processing of DNA lesions. UvrC both incises the 5' and 3' sides of the lesion. The N-terminal half is responsible for the 3' incision and the C-terminal half is responsible for the 5' incision. This chain is UvrABC system protein C, found in Latilactobacillus sakei subsp. sakei (strain 23K) (Lactobacillus sakei subsp. sakei).